The following is a 249-amino-acid chain: MYKVVLLRHGESIWNMENRFTGWTDVDLSPKGIEEAKQAGKILKEKGFTFDAAFTSVLKRAIRTLWIVLDELDLMWIPVYKSWRLNERHYGALQGLNKAETAKKYGEEQVKLWRRSAEVRPPALTKDDPRYPGNDPRYADLSEDEIPLTENLIDTINRVIPYWESTIAPTIKSGKRVIIAAHGNSLRGLVKYLDNLSNEEIMELNIPTGIPLVYELDENLKPIRHYYLADEEELKKKQQEVAEQGKARA.

Residues 8 to 15 (RHGESIWN), 21 to 22 (TG), Arg60, 87 to 90 (ERHY), Lys98, 114 to 115 (RR), and 183 to 184 (GN) each bind substrate. Catalysis depends on His9, which acts as the Tele-phosphohistidine intermediate. Glu87 acts as the Proton donor/acceptor in catalysis.

The protein belongs to the phosphoglycerate mutase family. BPG-dependent PGAM subfamily.

It carries out the reaction (2R)-2-phosphoglycerate = (2R)-3-phosphoglycerate. It participates in carbohydrate degradation; glycolysis; pyruvate from D-glyceraldehyde 3-phosphate: step 3/5. In terms of biological role, catalyzes the interconversion of 2-phosphoglycerate and 3-phosphoglycerate. The polypeptide is 2,3-bisphosphoglycerate-dependent phosphoglycerate mutase (Caldanaerobacter subterraneus subsp. tengcongensis (strain DSM 15242 / JCM 11007 / NBRC 100824 / MB4) (Thermoanaerobacter tengcongensis)).